Here is a 347-residue protein sequence, read N- to C-terminus: ATP-dependent (S)-NAD(P)H-hydrate dehydratase (347 aa).

One can recognise a YjeF C-terminal domain in the interval 53–344; sequence TLQLVRNIIP…AEVGAAFSKL (292 aa). Position 85 is a phosphotyrosine (Tyr-85). Residues Gly-153 and 206-212 each bind (6S)-NADPHX; that span reads NHVEFSR. N-linked (GlcNAc...) asparagine glycosylation is present at Asn-240. Residues 246-250 and 265-274 contribute to the ATP site; these read KGERD and GSSRRCGGQG. Asp-275 is a (6S)-NADPHX binding site. Residue Asn-297 is glycosylated (N-linked (GlcNAc...) asparagine).

It belongs to the NnrD/CARKD family. It depends on Mg(2+) as a cofactor.

It localises to the mitochondrion. The catalysed reaction is (6S)-NADHX + ATP = ADP + phosphate + NADH + H(+). It catalyses the reaction (6S)-NADPHX + ATP = ADP + phosphate + NADPH + H(+). Its function is as follows. Catalyzes the dehydration of the S-form of NAD(P)HX at the expense of ATP, which is converted to ADP. Together with NAD(P)HX epimerase, which catalyzes the epimerization of the S- and R-forms, the enzyme allows the repair of both epimers of NAD(P)HX, a damaged form of NAD(P)H that is a result of enzymatic or heat-dependent hydration. In Homo sapiens (Human), this protein is ATP-dependent (S)-NAD(P)H-hydrate dehydratase.